The chain runs to 285 residues: MANQKKKTLPPQHQNQQPGFEYLMDPRPVFDKPKKAKKLEGKTAIITGGDSGIGRAVSVLFAKEGANVVIVYLNEHQDAEETKQYVEKEGVKCLLIAGDVGDEAFCNDVVGQASQVFPSIDILVNNAAEQHVQPSIEKITSHQLIRTFQTNIFSMFYLTKAVLPHLKKGSSIINTASITAYKGNKTLIDYSATKGAIVTFTRSLSQSLVQQGIRVNAVAPGPIWTPLIPASFAAKDVEVFGSDVPMERPGQPVEVAPSYLYLASDDSTYVTGQTIHVNGGTIVNG.

Residues 1–25 (MANQKKKTLPPQHQNQQPGFEYLMD) form a disordered region. 45–69 (IITGGDSGIGRAVSVLFAKEGANVV) contacts NADP(+). Substrate is bound at residue serine 177. Tyrosine 190 functions as the Proton acceptor in the catalytic mechanism.

The protein belongs to the short-chain dehydrogenases/reductases (SDR) family.

This is an uncharacterized protein from Bacillus subtilis (strain 168).